Consider the following 390-residue polypeptide: Probable inactive secreted aspartyl protease (390 aa).

The N-terminal stretch at 1–20 (MQLTIKALVGILTTISAATA) is a signal peptide. A propeptide spans 21 to 69 (VSFDMENLGAEKRGVSGEELHMLHGNEVLARFANGVYPEVANGTRVSKR) (removed in mature form). N62 is a glycosylation site (N-linked (GlcNAc...) asparagine). Residues 86–388 (WAVKAKIGSN…KFDSNEMQIA (303 aa)) form the Peptidase A1 domain. Residues D104 and D273 contribute to the active site. Cysteines 313 and 346 form a disulfide.

This sequence belongs to the peptidase A1 family.

The protein localises to the secreted. Its function is as follows. Probable inactive secreted aspartyl protease. May promote an inflammatory immune response in the host when the host skin barrier is breached. Has no detectable protease activity in vitro on fluorogenic substrates, a peptide library, or with the general protease substrate casein. The presence of the enzyme also does not affect the activity of the secreted aspartyl protease SAP1. The chain is Probable inactive secreted aspartyl protease from Malassezia globosa (strain ATCC MYA-4612 / CBS 7966) (Dandruff-associated fungus).